The chain runs to 505 residues: Protein disulfide-isomerase A3 (505 aa).

Positions 1–24 (MSVPRPSRAALLLLVPLLALSAGA) are cleaved as a signal peptide. Thioredoxin domains are found at residues 25 to 131 (SDVV…KQAG) and 341 to 483 (SRDG…REAT). Residues Cys55 and Cys58 each act as nucleophile in the active site. 3 disulfide bridges follow: Cys55-Cys58, Cys83-Cys90, and Cys404-Cys407. Residues Cys404 and Cys407 each act as nucleophile in the active site. The tract at residues 486-505 (PVLQEEDKAKKSKKKAKEDL) is disordered. Over residues 495-505 (KKSKKKAKEDL) the composition is skewed to basic residues. The Prevents secretion from ER signature appears at 502–505 (KEDL).

The protein belongs to the protein disulfide isomerase family.

It localises to the endoplasmic reticulum. The protein resides in the endoplasmic reticulum lumen. The protein localises to the melanosome. It catalyses the reaction Catalyzes the rearrangement of -S-S- bonds in proteins.. Functionally, protein disulfide isomerase that catalyzes the formation, isomerization, and reduction or oxidation of disulfide bonds in client proteins and functions as a protein folding chaperone. The polypeptide is Protein disulfide-isomerase A3 (PDIA3) (Gallus gallus (Chicken)).